The primary structure comprises 413 residues: uncharacterized protein (413 aa).

Lys265 is modified (N6-(pyridoxal phosphate)lysine).

This sequence belongs to the threonine aldolase family. Pyridoxal 5'-phosphate serves as cofactor.

This is an uncharacterized protein from Caenorhabditis elegans.